Consider the following 208-residue polypeptide: LexA repressor (208 aa).

Residues 29–49 (VREICSAVGLSSTSTVHGHIS) constitute a DNA-binding region (H-T-H motif). Catalysis depends on for autocatalytic cleavage activity residues Ser129 and Lys167.

It belongs to the peptidase S24 family. In terms of assembly, homodimer.

The catalysed reaction is Hydrolysis of Ala-|-Gly bond in repressor LexA.. Represses a number of genes involved in the response to DNA damage (SOS response), including recA and lexA. In the presence of single-stranded DNA, RecA interacts with LexA causing an autocatalytic cleavage which disrupts the DNA-binding part of LexA, leading to derepression of the SOS regulon and eventually DNA repair. The protein is LexA repressor of Limosilactobacillus reuteri (strain DSM 20016) (Lactobacillus reuteri).